An 815-amino-acid polypeptide reads, in one-letter code: Probable oligoxyloglucan-reducing end-specific xyloglucanase (815 aa).

Residues 1-19 (MKFWLQQLGLAVLCASSAA) form the signal peptide. Asp-58 serves as the catalytic Nucleophile. The N-linked (GlcNAc...) asparagine glycan is linked to Asn-113. The stretch at 118-128 (FVSNDRGATFT) is one BNR 1 repeat. N-linked (GlcNAc...) asparagine glycosylation is present at Asn-180. The BNR 2 repeat unit spans residues 218 to 228 (YYTTDGGKNWE). Residues Asn-246, Asn-290, and Asn-304 are each glycosylated (N-linked (GlcNAc...) asparagine). One copy of the BNR 3 repeat lies at 351 to 361 (YLSRDGGKTWK). Asn-387 is a glycosylation site (N-linked (GlcNAc...) asparagine). Asp-489 (proton donor) is an active-site residue. Residues 545–555 (YSTDGGSEWTK) form a BNR 4 repeat. N-linked (GlcNAc...) asparagine glycosylation is found at Asn-564 and Asn-603. The BNR 5 repeat unit spans residues 649–658 (YVSTDGGLSY). N-linked (GlcNAc...) asparagine glycosylation occurs at Asn-662. 2 BNR repeats span residues 696 to 706 (YHTTDFGKRWK) and 749 to 759 (YRSDDNGSTWD). An N-linked (GlcNAc...) asparagine glycan is attached at Asn-754.

It belongs to the glycosyl hydrolase 74 family.

The protein localises to the secreted. The enzyme catalyses Hydrolysis of cellobiose from the reducing end of xyloglucans consisting of a beta-(1-&gt;4)-linked glucan carrying alpha-D-xylosyl groups on O-6 of the glucose residues. To be a substrate, the first residue must be unsubstituted, the second residue may bear a xylosyl group, whether further glycosylated or not, and the third residue, which becomes the new terminus by the action of the enzyme, is preferably xylosylated, but this xylose residue must not be further substituted.. Oligoxyloglucan-reducing end-specific xyloglucanase involved in degradation of xyloglucans. Releases the first two glycosyl segments from oligoxyloglucans. Active against cotton xyloglucan, tamarind xyloglucan and tamarind xyloglucan oligomers. The sequence is that of Probable oligoxyloglucan-reducing end-specific xyloglucanase (xgcA) from Neosartorya fischeri (strain ATCC 1020 / DSM 3700 / CBS 544.65 / FGSC A1164 / JCM 1740 / NRRL 181 / WB 181) (Aspergillus fischerianus).